We begin with the raw amino-acid sequence, 207 residues long: Octanoyltransferase (207 aa).

A BPL/LPL catalytic domain is found at 27-203 (ADTEDELWVV…HLETQFTPKA (177 aa)). Residues 66–73 (RGGQITYH), 133–135 (SLG), and 146–148 (GLA) each bind substrate. The Acyl-thioester intermediate role is filled by cysteine 164.

It belongs to the LipB family.

The protein localises to the cytoplasm. The catalysed reaction is octanoyl-[ACP] + L-lysyl-[protein] = N(6)-octanoyl-L-lysyl-[protein] + holo-[ACP] + H(+). Its pathway is protein modification; protein lipoylation via endogenous pathway; protein N(6)-(lipoyl)lysine from octanoyl-[acyl-carrier-protein]: step 1/2. Its function is as follows. Catalyzes the transfer of endogenously produced octanoic acid from octanoyl-acyl-carrier-protein onto the lipoyl domains of lipoate-dependent enzymes. Lipoyl-ACP can also act as a substrate although octanoyl-ACP is likely to be the physiological substrate. The sequence is that of Octanoyltransferase from Neisseria meningitidis serogroup B (strain ATCC BAA-335 / MC58).